Reading from the N-terminus, the 363-residue chain is Protein disulfide-isomerase 1 (363 aa).

The signal sequence occupies residues 1–20 (MKILLFVTLIALAFVALCSA). 2 consecutive Thioredoxin domains span residues 21–132 (EGNV…NHAK) and 133–285 (TNVK…AAAE). Active-site nucleophile residues include Cys-51, Cys-54, Cys-172, and Cys-175. 2 cysteine pairs are disulfide-bonded: Cys-51–Cys-54 and Cys-172–Cys-175.

Belongs to the protein disulfide isomerase family.

Its subcellular location is the endoplasmic reticulum lumen. It carries out the reaction Catalyzes the rearrangement of -S-S- bonds in proteins.. In terms of biological role, participates in the folding of proteins containing disulfide bonds, may be involved in glycosylation, prolyl hydroxylation and triglyceride transfer. This is Protein disulfide-isomerase 1 (pdi1) from Dictyostelium discoideum (Social amoeba).